Here is a 200-residue protein sequence, read N- to C-terminus: Ribonuclease HII (200 aa).

In terms of domain architecture, RNase H type-2 spans 11–200 (QSIAGVDEVG…VRRALISLTG (190 aa)). A divalent metal cation is bound by residues Asp17, Glu18, and Asp109.

It belongs to the RNase HII family. Mn(2+) serves as cofactor. Mg(2+) is required as a cofactor.

It localises to the cytoplasm. It catalyses the reaction Endonucleolytic cleavage to 5'-phosphomonoester.. Its function is as follows. Endonuclease that specifically degrades the RNA of RNA-DNA hybrids. This is Ribonuclease HII from Hamiltonella defensa subsp. Acyrthosiphon pisum (strain 5AT).